We begin with the raw amino-acid sequence, 235 residues long: ATP-dependent Clp protease proteolytic subunit (235 aa).

The active-site Nucleophile is the Ser123. His148 is an active-site residue.

This sequence belongs to the peptidase S14 family. Fourteen ClpP subunits assemble into 2 heptameric rings which stack back to back to give a disk-like structure with a central cavity, resembling the structure of eukaryotic proteasomes.

It localises to the cytoplasm. The catalysed reaction is Hydrolysis of proteins to small peptides in the presence of ATP and magnesium. alpha-casein is the usual test substrate. In the absence of ATP, only oligopeptides shorter than five residues are hydrolyzed (such as succinyl-Leu-Tyr-|-NHMec, and Leu-Tyr-Leu-|-Tyr-Trp, in which cleavage of the -Tyr-|-Leu- and -Tyr-|-Trp bonds also occurs).. Its function is as follows. Cleaves peptides in various proteins in a process that requires ATP hydrolysis. Has a chymotrypsin-like activity. Plays a major role in the degradation of misfolded proteins. The sequence is that of ATP-dependent Clp protease proteolytic subunit from Novosphingobium aromaticivorans (strain ATCC 700278 / DSM 12444 / CCUG 56034 / CIP 105152 / NBRC 16084 / F199).